Consider the following 128-residue polypeptide: Large ribosomal subunit protein bL12 (128 aa).

It belongs to the bacterial ribosomal protein bL12 family. Homodimer. Part of the ribosomal stalk of the 50S ribosomal subunit. Forms a multimeric L10(L12)X complex, where L10 forms an elongated spine to which 2 to 4 L12 dimers bind in a sequential fashion. Binds GTP-bound translation factors.

Functionally, forms part of the ribosomal stalk which helps the ribosome interact with GTP-bound translation factors. Is thus essential for accurate translation. This is Large ribosomal subunit protein bL12 from Brachyspira hyodysenteriae (strain ATCC 49526 / WA1).